An 800-amino-acid chain; its full sequence is Transducin beta-like protein 3 (800 aa).

A2 bears the N-acetylalanine mark. 13 WD repeats span residues 64–105 (EDQE…RLWK), 107–146 (IHTA…GTHH), 149–190 (GSPG…CLAV), 193–232 (AHYS…TSRT), 245–284 (LPEE…CVYT), 290–329 (GLRQ…LQKQ), 332–372 (GYSE…CQIL), 374–413 (GHTD…QVAC), 419–459 (GHTH…PSKN), 477–516 (CHDK…LLGV), 519–560 (GHRR…KTFE), 562–602 (HDAS…RTLD), and 604–642 (HEDK…EQAE). Residue K407 forms a Glycyl lysine isopeptide (Lys-Gly) (interchain with G-Cter in SUMO2) linkage.

As to quaternary structure, part of the small subunit (SSU) processome, composed of more than 70 proteins and the RNA chaperone small nucleolar RNA (snoRNA) U3.

It is found in the nucleus. The protein resides in the nucleolus. Its function is as follows. Part of the small subunit (SSU) processome, first precursor of the small eukaryotic ribosomal subunit. During the assembly of the SSU processome in the nucleolus, many ribosome biogenesis factors, an RNA chaperone and ribosomal proteins associate with the nascent pre-rRNA and work in concert to generate RNA folding, modifications, rearrangements and cleavage as well as targeted degradation of pre-ribosomal RNA by the RNA exosome. The protein is Transducin beta-like protein 3 (Tbl3) of Rattus norvegicus (Rat).